A 316-amino-acid polypeptide reads, in one-letter code: Ribosomal RNA small subunit methyltransferase H (316 aa).

S-adenosyl-L-methionine contacts are provided by residues 35 to 37 (SGH), Asp55, Phe84, Asp105, and Gln112.

It belongs to the methyltransferase superfamily. RsmH family.

The protein resides in the cytoplasm. The enzyme catalyses cytidine(1402) in 16S rRNA + S-adenosyl-L-methionine = N(4)-methylcytidine(1402) in 16S rRNA + S-adenosyl-L-homocysteine + H(+). Its function is as follows. Specifically methylates the N4 position of cytidine in position 1402 (C1402) of 16S rRNA. In Streptococcus equi subsp. zooepidemicus (strain H70), this protein is Ribosomal RNA small subunit methyltransferase H.